The chain runs to 322 residues: ATP-dependent 6-phosphofructokinase (322 aa).

Position 12 (Gly12) interacts with ATP. ADP is bound at residue Arg22–Lys26. ATP is bound by residues Arg73–Ser74 and Gly103–Ser106. Asp104 is a binding site for Mg(2+). Thr127–Asp129 is a binding site for substrate. The active-site Proton acceptor is the Asp129. Arg156 lines the ADP pocket. Residues Arg164 and Met171–Arg173 contribute to the substrate site. ADP-binding positions include Gly187–Asp189 and Lys215–His217. Substrate-binding positions include Glu224, Arg245, and His251 to Arg254.

Belongs to the phosphofructokinase type A (PFKA) family. ATP-dependent PFK group I subfamily. Prokaryotic clade 'B1' sub-subfamily. As to quaternary structure, homotetramer. Requires Mg(2+) as cofactor.

It localises to the cytoplasm. The catalysed reaction is beta-D-fructose 6-phosphate + ATP = beta-D-fructose 1,6-bisphosphate + ADP + H(+). It functions in the pathway carbohydrate degradation; glycolysis; D-glyceraldehyde 3-phosphate and glycerone phosphate from D-glucose: step 3/4. Allosterically activated by ADP and other diphosphonucleosides, and allosterically inhibited by phosphoenolpyruvate. Functionally, catalyzes the phosphorylation of D-fructose 6-phosphate to fructose 1,6-bisphosphate by ATP, the first committing step of glycolysis. This Fusobacterium nucleatum subsp. nucleatum (strain ATCC 25586 / DSM 15643 / BCRC 10681 / CIP 101130 / JCM 8532 / KCTC 2640 / LMG 13131 / VPI 4355) protein is ATP-dependent 6-phosphofructokinase.